The primary structure comprises 241 residues: MSNFAVSLPEVIAVLPAAGIGSRMLADCPKQYLTVGGKTIIEHAIFSLLHHPRIQRVIVVIHPQDTQFSRLSVAQDPRISTVYGGDQRANSVMAGLQLAGQAEWVLVHDAARPCLHLDDLSRLLSITECSQVGGILAAPVRDTMKRAEPGIQAIAHTVDRQDLWHALTPQLFPLELLKLCLSRALREGVAVTDEASALEYCGYHPILVTGRSDNIKVTRPEDLALAEFYLTQRQSLNNDSL.

The protein belongs to the IspD/TarI cytidylyltransferase family. IspD subfamily. In terms of assembly, homodimer.

The enzyme catalyses 2-C-methyl-D-erythritol 4-phosphate + CTP + H(+) = 4-CDP-2-C-methyl-D-erythritol + diphosphate. The protein operates within isoprenoid biosynthesis; isopentenyl diphosphate biosynthesis via DXP pathway; isopentenyl diphosphate from 1-deoxy-D-xylulose 5-phosphate: step 2/6. Its function is as follows. Catalyzes the formation of 4-diphosphocytidyl-2-C-methyl-D-erythritol from CTP and 2-C-methyl-D-erythritol 4-phosphate (MEP). The sequence is that of 2-C-methyl-D-erythritol 4-phosphate cytidylyltransferase from Yersinia pseudotuberculosis serotype I (strain IP32953).